A 285-amino-acid polypeptide reads, in one-letter code: Acetyl-coenzyme A carboxylase carboxyl transferase subunit beta (285 aa).

The region spanning 22 to 285 (LWTKCEACGA…HPGVAYAPGV (264 aa)) is the CoA carboxyltransferase N-terminal domain. Residues Cys26, Cys29, Cys45, and Cys48 each coordinate Zn(2+). A C4-type zinc finger spans residues 26 to 48 (CEACGAQIYKKEFQENLHVCPKC).

It belongs to the AccD/PCCB family. Acetyl-CoA carboxylase is a heterohexamer composed of biotin carboxyl carrier protein (AccB), biotin carboxylase (AccC) and two subunits each of ACCase subunit alpha (AccA) and ACCase subunit beta (AccD). The cofactor is Zn(2+).

The protein localises to the cytoplasm. It carries out the reaction N(6)-carboxybiotinyl-L-lysyl-[protein] + acetyl-CoA = N(6)-biotinyl-L-lysyl-[protein] + malonyl-CoA. It participates in lipid metabolism; malonyl-CoA biosynthesis; malonyl-CoA from acetyl-CoA: step 1/1. Functionally, component of the acetyl coenzyme A carboxylase (ACC) complex. Biotin carboxylase (BC) catalyzes the carboxylation of biotin on its carrier protein (BCCP) and then the CO(2) group is transferred by the transcarboxylase to acetyl-CoA to form malonyl-CoA. This chain is Acetyl-coenzyme A carboxylase carboxyl transferase subunit beta, found in Thermus thermophilus (strain ATCC BAA-163 / DSM 7039 / HB27).